A 68-amino-acid polypeptide reads, in one-letter code: Large ribosomal subunit protein bL31 (68 aa).

This sequence belongs to the bacterial ribosomal protein bL31 family. Type A subfamily. As to quaternary structure, part of the 50S ribosomal subunit.

In terms of biological role, binds the 23S rRNA. The chain is Large ribosomal subunit protein bL31 from Helicobacter hepaticus (strain ATCC 51449 / 3B1).